We begin with the raw amino-acid sequence, 242 residues long: Tryptophan synthase alpha chain (242 aa).

Active-site proton acceptor residues include Glu-31 and Asp-42.

Belongs to the TrpA family. As to quaternary structure, tetramer of two alpha and two beta chains.

It carries out the reaction (1S,2R)-1-C-(indol-3-yl)glycerol 3-phosphate + L-serine = D-glyceraldehyde 3-phosphate + L-tryptophan + H2O. It functions in the pathway amino-acid biosynthesis; L-tryptophan biosynthesis; L-tryptophan from chorismate: step 5/5. The alpha subunit is responsible for the aldol cleavage of indoleglycerol phosphate to indole and glyceraldehyde 3-phosphate. The sequence is that of Tryptophan synthase alpha chain from Staphylococcus aureus (strain MRSA252).